A 282-amino-acid polypeptide reads, in one-letter code: MVVVQKIQEMKEIAKKLKKEGKSIGFVPTMGYLHEGHLSLVRLSKQQNDITIMSIFVNPIQFGPNEDYDRYPRDFERDKSLAEKEGVDYIFYPSVEEMYPEDFKTVVSVKKITEIMCGKSRPGHFDGVATVVLKLFNIVNPDRAYFGQKDAQQLAVIKQMVKDLNLDVEIVPCPIVREQDGLAMSSRNVYLSEEERKSATVLYRALNLAKEMIEKGQKDVSSIKRAMEEMILKEKYTKIDYIEFVNNDTFEIISKVEGKVLIALAVFVGKARLIDNIVVEAK.

An ATP-binding site is contributed by 30–37; the sequence is MGYLHEGH. Catalysis depends on histidine 37, which acts as the Proton donor. Glutamine 61 lines the (R)-pantoate pocket. Glutamine 61 is a beta-alanine binding site. 147-150 lines the ATP pocket; the sequence is GQKD. Glutamine 153 lines the (R)-pantoate pocket. Residues valine 176 and 184-187 each bind ATP; that span reads MSSR.

Belongs to the pantothenate synthetase family. In terms of assembly, homodimer.

It is found in the cytoplasm. It carries out the reaction (R)-pantoate + beta-alanine + ATP = (R)-pantothenate + AMP + diphosphate + H(+). The protein operates within cofactor biosynthesis; (R)-pantothenate biosynthesis; (R)-pantothenate from (R)-pantoate and beta-alanine: step 1/1. Catalyzes the condensation of pantoate with beta-alanine in an ATP-dependent reaction via a pantoyl-adenylate intermediate. The chain is Pantothenate synthetase from Caldicellulosiruptor bescii (strain ATCC BAA-1888 / DSM 6725 / KCTC 15123 / Z-1320) (Anaerocellum thermophilum).